The chain runs to 791 residues: Linear element protein rec10 (791 aa).

Disordered regions lie at residues 462–523 (NSVP…AKSN) and 644–672 (LLDGTCSSPPNNECFNDKEPDSSSSTLIS). The Nuclear localization signal motif lies at 485–492 (QRRKDGKF). Over residues 493-503 (AKSTKRKKQKS) the composition is skewed to basic residues. Polar residues predominate over residues 644–657 (LLDGTCSSPPNNEC).

As to quaternary structure, component of linear elements (LinEs), which are similar to synaptonemal complexes, at least composed of rec27, rec25, rec10 and mug20. Interacts with rec25; the interaction is direct. Interacts with hop1 (via N-terminus); the interaction is direct. Interacts with rec15 (via C-terminus); the interaction is direct.

The protein localises to the nucleus. The protein resides in the chromosome. Organizes linear element components on chromosomes and is thus required for meiotic DNA recombination. The protein is Linear element protein rec10 of Schizosaccharomyces pombe (strain 972 / ATCC 24843) (Fission yeast).